The primary structure comprises 587 residues: MKFAISTLLIILQAAAVFAAFPISDITVVSERTDASTAYLSDWFVVSFVFSTAGSDETIAGDATIEVSIPNELEFVQYPDSVDPSVSEFFTTAGVQVLSTAFDYDSHVLTFTFSDPGQVITDLEGVVFFTLKLSEQFTESASPGQHTFDFETSDQTYSPSVDLVALDRSQPIKLSNAVTGGVEWFVDIPGAFGDITNIDISTVQTPGTFDCSEVKYAVGSSLNEFGDFTPQDRTTFFSNSSSGEWIPITPASGLPVESFECGDGTISLSFAGELADDEVLRVSFLSNLADDVLEVQNVVNVDLTTADSRKRALTSFVLDEPFYRASRTDTAAFEAFAAVPADGDITSTSTAITSVTATVTHTTVTSVCYVCAETPVTVTYTAPVITNPIYYTTKVHVCNVCAETPITYTVTIPCETDEYAPAKPTGTEGEKIVTVITKEGGDKYTKTYEEVTYTKTYPKGGHEDHIVTVKTKEGGEKVTKTYEEVTYTKGPEIVTVVTKEGGEKVTTTYHDVPEVVTVITKEGGEKVTTTYPATYPATYTEGHSAGVPTSASTPPQATYTVSEAQVNLGSKSAVGLLAIVPMLFLAI.

A signal peptide spans 1–19; it reads MKFAISTLLIILQAAAVFA. Cys-211 and Cys-261 are oxidised to a cystine. N-linked (GlcNAc...) asparagine glycosylation occurs at Asn-239. Tandem repeats lie at residues 432–455, 466–489, 491–512, and 513–531. Residues 432–531 form a 4 X 24 AA approximate tandem repeats, Thr-rich region; the sequence is IVTVITKEGG…EGGEKVTTTY (100 aa). A lipid anchor (GPI-anchor amidated serine) is attached at Ser-562. A propeptide spans 563–587 (removed in mature form); it reads EAQVNLGSKSAVGLLAIVPMLFLAI.

The GPI-anchor is attached to the protein in the endoplasmic reticulum and serves to target the protein to the cell surface. There, the glucosamine-inositol phospholipid moiety is cleaved off and the GPI-modified mannoprotein is covalently attached via its lipidless GPI glycan remnant to the 1,6-beta-glucan of the outer cell wall layer.

The protein localises to the cell membrane. It is found in the secreted. The protein resides in the cell wall. In terms of biological role, putative adhesion protein. May be involved in cell-cell interaction, interacting with other proteins by salt bridges and hydrogen bonds. The polypeptide is Putative adhesin (Komagataella phaffii (strain ATCC 76273 / CBS 7435 / CECT 11047 / NRRL Y-11430 / Wegner 21-1) (Yeast)).